We begin with the raw amino-acid sequence, 392 residues long: Caveolae-associated protein 1 (392 aa).

Met1 carries the N-acetylmethionine modification. Over residues 1–10 (MEDVTLHIVE) the composition is skewed to basic and acidic residues. The segment at 1–45 (MEDVTLHIVERPYSGFPDASSEGPEPTQGEARATEEPSGTGSDEL) is disordered. The segment at 1 to 100 (MEDVTLHIVE…IQGELSKLGK (100 aa)) is required for homotrimerization and for interaction with CAVIN2 and CAVIN3. Phosphoserine is present on residues Ser21 and Ser38. At Thr40 the chain carries Phosphothreonine. Phosphoserine occurs at positions 42 and 48. The nuclear export signal stretch occupies residues 54–64 (VLVLSLLDKII). Residues 55 to 77 (LVLSLLDKIIGAVDQIQLTQAQL) form a leucine-zipper 1 region. Residue Lys118 forms a Glycyl lysine isopeptide (Lys-Gly) (interchain with G-Cter in SUMO2) linkage. At Ser120 the chain carries Phosphoserine. Lys124 participates in a covalent cross-link: Glycyl lysine isopeptide (Lys-Gly) (interchain with G-Cter in SUMO2). The nuclear localization signal stretch occupies residues 138-154 (KKLEVNEAELLRRRNFK). Tyr158 bears the Phosphotyrosine mark. A Glycyl lysine isopeptide (Lys-Gly) (interchain with G-Cter in SUMO1); alternate cross-link involves residue Lys163. Lys163 participates in a covalent cross-link: Glycyl lysine isopeptide (Lys-Gly) (interchain with G-Cter in SUMO2); alternate. Lys167 is covalently cross-linked (Glycyl lysine isopeptide (Lys-Gly) (interchain with G-Cter in SUMO2)). Positions 168–188 (LSVSKSLKESEALPEKEGDEL) are leucine-zipper 2. 2 positions are modified to phosphoserine: Ser169 and Ser171. Lys172 participates in a covalent cross-link: Glycyl lysine isopeptide (Lys-Gly) (interchain with G-Cter in SUMO2). Phosphoserine is present on residues Ser173 and Ser177. Basic and acidic residues predominate over residues 173–183 (SLKESEALPEK). The tract at residues 173–197 (SLKESEALPEKEGDELGEGERPEDD) is disordered. Residues 184–197 (EGDELGEGERPEDD) are compositionally biased toward acidic residues. Thr198 carries the post-translational modification Phosphothreonine. Residues 201 to 284 (IELSSDEAVE…RMNKLGTRLV (84 aa)) are a coiled coil. Phosphoserine occurs at positions 204 and 205. Residues 235-251 (KKAFSKEKMEKTKVRTR) are nuclear localization signal. Residues 259-299 (LKTKENLEKTRHTLEKRMNKLGTRLVPVERREKLKTSRDKL) are leucine-zipper 3. Ser302 is subject to Phosphoserine. A Phosphothreonine modification is found at Thr304. Tyr310 carries the phosphotyrosine modification. Lys328 participates in a covalent cross-link: Glycyl lysine isopeptide (Lys-Gly) (interchain with G-Cter in SUMO2). The interval 347 to 367 (GPEDDEVGAERGEATDLLRGS) is disordered. A phosphoserine mark is found at Ser367, Ser368, Ser381, Ser389, and Ser391.

The protein belongs to the CAVIN family. As to quaternary structure, component of the CAVIN complex composed of CAVIN1, CAVIN2, CAVIN3 and CAVIN4. Homotrimer. Interacts with LIPE in the adipocyte cytoplasm. Interacts with RNA polymerase I subunit POLR1A/RPA1. Interacts with TTF1. Binds the 3' end of pre-rRNA. Interacts with transcription factor ZNF148. Interacts with CAV1, CAVIN2 and CAVIN3. Interacts with CAVIN4. In terms of processing, phosphorylated. Present in active and inactive forms. Changes in phosphorylation pattern may alter activity. Phosphorylation at Tyr-158 is essential for its function in the regulation of the ribosomal transcriptional activity. Post-translationally, monoubiquitinated. In terms of tissue distribution, expressed in the heart, stomach, adipose tissue and lung (at protein level). Expressed in testis, kidney, muscle, liver, spleen and brain.

It localises to the membrane. Its subcellular location is the caveola. The protein resides in the cell membrane. It is found in the microsome. The protein localises to the endoplasmic reticulum. It localises to the cytoplasm. Its subcellular location is the cytosol. The protein resides in the mitochondrion. It is found in the nucleus. In terms of biological role, plays an important role in caveolae formation and organization. Essential for the formation of caveolae in all tissues. Core component of the CAVIN complex which is essential for recruitment of the complex to the caveolae in presence of calveolin-1 (CAV1). Essential for normal oligomerization of CAV1. Promotes ribosomal transcriptional activity in response to metabolic challenges in the adipocytes and plays an important role in the formation of the ribosomal transcriptional loop. Dissociates transcription complexes paused by DNA-bound TTF1, thereby releasing both RNA polymerase I and pre-RNA from the template. The caveolae biogenesis pathway is required for the secretion of proteins such as GASK1A. This Mus musculus (Mouse) protein is Caveolae-associated protein 1 (Cavin1).